We begin with the raw amino-acid sequence, 740 residues long: MAAFSEMGVMPEIAQAVEEMDWLLPTDIQAESIPLILGGGDVLMAAETGSGKTGAFSIPVIQIVYETLKDQQEGKKGKATIKTGASVLNKWQMNPYDRGSAFAIGSDGLCCQSREVKEWHGCRATKGLTKGKHYYEVSCHDQGLCRVGWSSMQASLDLGTDKFGFGFGGTGKKSHNKQFDNYGEEFTMHDTIGCYLDIDKGHVKFSKNGKDLGLAFEIPPHMKNQALFPACVLKNAELKFNFGEEEFKFPPKDGFVALSKAPESFVVKSQHTGSAQVAQTKFLPNAPKALIVEPSRELAEQTLNNVKQFKKYIDNPKLRELLIIGGVAARDQLSVLDNGVDIVVGTPGRLDDLVSTGKLNLSQVRFLVLDEADGLLSQGYSDFINRIHNQIPQITSDGKRLQVIVCSATLHSFDVKKLSEKIMHFPTWVDLKGEDSVPDTVHHVVVPVNPKTDRLWERLGKSHIRTDEVHAKDNTRPGANSPEMWSEAIKILKGEYAVRAIKEHKMDQAIIFCRTKIDCDNLEQYFMQQGGGPDKKGHQFSCVCLHGDRKPHERKQNLERFKKGDVRFLICTDVAARGIDIHGVPYVINVTLPDEKQNYVHRIGRVGRAERMGLAISLVATEKEKVWYHVCSSRGKGCYNTRLKEDGGCTIWYNEMQLLSEIEEHLNCTISQVEPDIKVPVDEFDGKVTYGQKRTLGGGNYKGHVDVLAPTVQELAALEKEAQTSFLHLGYLPNQLFRTF.

A necessary for interaction with HNRNPK region spans residues 1–295 (MAAFSEMGVM…APKALIVEPS (295 aa)). Residues 1 to 448 (MAAFSEMGVM…DTVHHVVVPV (448 aa)) form an interaction with dsRNA region. Positions 1–525 (MAAFSEMGVM…KIDCDNLEQY (525 aa)) are necessary for interaction with RELA. In terms of domain architecture, Helicase ATP-binding spans 2-428 (AAFSEMGVMP…SEKIMHFPTW (427 aa)). 46 to 53 (AETGSGKT) contacts ATP. A B30.2/SPRY domain is found at 70–247 (DQQEGKKGKA…LKFNFGEEEF (178 aa)). An N6-acetyllysine mark is found at lysine 239 and lysine 268. An N6-acetyllysine; alternate modification is found at lysine 281. Lysine 281 participates in a covalent cross-link: Glycyl lysine isopeptide (Lys-Gly) (interchain with G-Cter in SUMO2); alternate. Residues 370–373 (DEAD) carry the DEAD box motif. Residue serine 481 is modified to Phosphoserine. Residues 493–681 (KGEYAVRAIK…QVEPDIKVPV (189 aa)) enclose the Helicase C-terminal domain. The necessary for interaction with HNRNPK stretch occupies residues 525 to 740 (YFMQQGGGPD…YLPNQLFRTF (216 aa)).

It belongs to the DEAD box helicase family. DDX1 subfamily. In terms of assembly, found in a multi-helicase-TICAM1 complex at least composed of DHX36, DDX1, DDX21 and TICAM1; this complex exists in resting cells with or without poly(I:C) RNA ligand stimulation. Interacts with DHX36. Interacts (via B30.2/SPRY domain) with DDX21 (via N-terminus); this interaction serves as bridges to TICAM1. Interacts with FAM98A (via N- and C-terminus). Interacts with PHF5A (via C-terminus). Interacts with MBNL1. Interacts with CSTF2. Interacts with HNRNPK. Interacts with ATM. Interacts with RELA (via C-terminus). Component of the tRNA-splicing ligase complex. Interacts with PQBP1. Interacts with ERCC6. Phosphorylated by ATM kinase; phosphorylation is increased in response to ionizing radiation (IR).

The protein resides in the nucleus. The protein localises to the cytoplasm. It is found in the cytoplasmic granule. Its subcellular location is the cytosol. It localises to the mitochondrion. The enzyme catalyses ATP + H2O = ADP + phosphate + H(+). Its function is as follows. Acts as an ATP-dependent RNA helicase, able to unwind both RNA-RNA and RNA-DNA duplexes. Possesses 5' single-stranded RNA overhang nuclease activity. Possesses ATPase activity on various RNA, but not DNA polynucleotides. May play a role in RNA clearance at DNA double-strand breaks (DSBs), thereby facilitating the template-guided repair of transcriptionally active regions of the genome. Together with RELA, acts as a coactivator to enhance NF-kappa-B-mediated transcriptional activation. Acts as a positive transcriptional regulator of cyclin CCND2 expression. Binds to the cyclin CCND2 promoter region. Associates with chromatin at the NF-kappa-B promoter region via association with RELA. Binds to poly(A) RNA. May be involved in 3'-end cleavage and polyadenylation of pre-mRNAs. Component of the tRNA-splicing ligase complex required to facilitate the enzymatic turnover of catalytic subunit RTCB: together with archease (ZBTB8OS), acts by facilitating the guanylylation of RTCB, a key intermediate step in tRNA ligation. Component of a multi-helicase-TICAM1 complex that acts as a cytoplasmic sensor of viral double-stranded RNA (dsRNA) and plays a role in the activation of a cascade of antiviral responses including the induction of pro-inflammatory cytokines via the adapter molecule TICAM1. Specifically binds (via helicase ATP-binding domain) on both short and long poly(I:C) dsRNA. This is ATP-dependent RNA helicase DDX1 (DDX1) from Bos taurus (Bovine).